The following is a 147-amino-acid chain: Ribosome-binding factor A (147 aa).

The disordered stretch occupies residues 123–147 (LAKLKEGAQPAGDANPYKTSDEEED).

The protein belongs to the RbfA family. As to quaternary structure, monomer. Binds 30S ribosomal subunits, but not 50S ribosomal subunits or 70S ribosomes.

It localises to the cytoplasm. Its function is as follows. One of several proteins that assist in the late maturation steps of the functional core of the 30S ribosomal subunit. Associates with free 30S ribosomal subunits (but not with 30S subunits that are part of 70S ribosomes or polysomes). Required for efficient processing of 16S rRNA. May interact with the 5'-terminal helix region of 16S rRNA. This Corynebacterium aurimucosum (strain ATCC 700975 / DSM 44827 / CIP 107346 / CN-1) (Corynebacterium nigricans) protein is Ribosome-binding factor A.